Reading from the N-terminus, the 268-residue chain is Tryptophan synthase alpha chain (268 aa).

Active-site proton acceptor residues include glutamate 49 and aspartate 60.

The protein belongs to the TrpA family. In terms of assembly, tetramer of two alpha and two beta chains.

It catalyses the reaction (1S,2R)-1-C-(indol-3-yl)glycerol 3-phosphate + L-serine = D-glyceraldehyde 3-phosphate + L-tryptophan + H2O. It participates in amino-acid biosynthesis; L-tryptophan biosynthesis; L-tryptophan from chorismate: step 5/5. Functionally, the alpha subunit is responsible for the aldol cleavage of indoleglycerol phosphate to indole and glyceraldehyde 3-phosphate. The protein is Tryptophan synthase alpha chain of Mannheimia succiniciproducens (strain KCTC 0769BP / MBEL55E).